A 281-amino-acid chain; its full sequence is Protoheme IX farnesyltransferase (281 aa).

The next 9 membrane-spanning stretches (helical) occupy residues 13 to 33 (VIWLLVLSALVGYIAAAGPLV), 38 to 58 (LIELTVVGFLSTGGSAAFNMY), 85 to 105 (ALTFSIAVSLSGFTLSYLWLG), 107 to 127 (WVTLMIALGWFFYAVLYTIML), 132 to 152 (WLNIVIGGFAGNAALLSGWIM), 161 to 181 (ILLSMVIYVWIPAHIWSLAYY), 206 to 226 (IISILNLVSIIYMLVLYQLYM), 227 to 247 (AKLIGYILVIPATLAGIIVTI), and 261 to 281 (MFKATSPILLLFLLAVIISRI).

It belongs to the UbiA prenyltransferase family. Protoheme IX farnesyltransferase subfamily.

The protein resides in the cell membrane. It carries out the reaction heme b + (2E,6E)-farnesyl diphosphate + H2O = Fe(II)-heme o + diphosphate. It functions in the pathway porphyrin-containing compound metabolism; heme O biosynthesis; heme O from protoheme: step 1/1. Functionally, converts heme B (protoheme IX) to heme O by substitution of the vinyl group on carbon 2 of heme B porphyrin ring with a hydroxyethyl farnesyl side group. The sequence is that of Protoheme IX farnesyltransferase from Caldivirga maquilingensis (strain ATCC 700844 / DSM 13496 / JCM 10307 / IC-167).